Reading from the N-terminus, the 260-residue chain is Type III pantothenate kinase (260 aa).

Residue 6–13 coordinates ATP; that stretch reads DVGNTNIT. 107–110 contributes to the substrate binding site; it reads GADR. Asp109 functions as the Proton acceptor in the catalytic mechanism. Asp129 is a binding site for K(+). Residue Thr132 participates in ATP binding. Position 184 (Thr184) interacts with substrate.

It belongs to the type III pantothenate kinase family. As to quaternary structure, homodimer. It depends on NH4(+) as a cofactor. K(+) serves as cofactor.

The protein resides in the cytoplasm. It carries out the reaction (R)-pantothenate + ATP = (R)-4'-phosphopantothenate + ADP + H(+). It functions in the pathway cofactor biosynthesis; coenzyme A biosynthesis; CoA from (R)-pantothenate: step 1/5. In terms of biological role, catalyzes the phosphorylation of pantothenate (Pan), the first step in CoA biosynthesis. The chain is Type III pantothenate kinase from Agathobacter rectalis (strain ATCC 33656 / DSM 3377 / JCM 17463 / KCTC 5835 / VPI 0990) (Eubacterium rectale).